Consider the following 579-residue polypeptide: SHC-transforming protein 1 (579 aa).

Residue methionine 1 is modified to N-acetylmethionine. Positions 1-137 (MDLLPPKPKY…QLGGEEWTRH (137 aa)) are disordered. Low complexity predominate over residues 16–44 (ESLSSLEEGASGSTPPEELPSPSASSLGP). A phosphoserine mark is found at serine 36 and serine 139. Lysine 154 is subject to N6-acetyllysine. The PID domain maps to 156–339 (MGPGVSYLVR…AGFDGSAWDE (184 aa)). The disordered stretch occupies residues 337–357 (WDEEEEEPPDHQYYNDFPGKE). The segment at 340–483 (EEEEPPDHQY…SMAEQLQGEP (144 aa)) is CH1. Residues tyrosine 349, tyrosine 350, and tyrosine 423 each carry the phosphotyrosine modification. The tract at residues 432–451 (ARQAGGGAGPPNPSLNGSAP) is disordered. Phosphoserine is present on serine 449. The SH2 domain occupies 484 to 575 (WFHGKLSRRE…GSELCLQQPV (92 aa)).

As to quaternary structure, interacts with CPNE3; this interaction may mediate the binding of CPNE3 with ERBB2. Interacts with the NPXY motif of tyrosine-phosphorylated IGF1R and INSR in vitro via the PID domain. Once activated, binds to GRB2. Interacts with tyrosine-phosphorylated DDR2 and CD3T. Interacts with the N-terminal region of APS. Interacts with GRB7 and KIT. Interacts with PTK2/FAK1. Interacts with phosphorylated LRP1 and IRS4. Interacts with FLT4 (tyrosine-phosphorylated). Interacts with PDGFRB (tyrosine-phosphorylated). Interacts with ERBB4. Interacts with TEK/TIE2 (tyrosine-phosphorylated). Interacts with ALK, GAB2, TRIM31, INPP5D/SHIP1 and INPPL1/SHIP2. Interacts with PTPN6/SHP (tyrosine phosphorylated). Identified in a complex containing FGFR4, NCAM1, CDH2, PLCG1, FRS2, SRC, SHC1, GAP43 and CTTN. Interacts with EPHB1 and GRB2; activates the MAPK/ERK cascade to regulate cell migration. Interacts with the Trk receptors NTRK1, NTRK2 and NTRK3; in a phosphotyrosine-dependent manner. Interacts with CEACAM1; this interaction is CEACAM1-phosphorylation-dependent and mediates interaction with EGFR or INSR resulting in decrease coupling of SHC1 to the MAPK3/ERK1-MAPK1/ERK2 pathway. Interacts (via PID domain) with PEAK1 (when phosphorylated at 'Tyr-1177'). Found in a complex with PPP1CA, PPP1CC, SHC1 and PEAK1. Post-translationally, phosphorylated in response to FLT4 signaling. Tyrosine phosphorylated by ligand-activated PDGFRB. May be tyrosine phosphorylated by activated PTK2/FAK1. Tyrosine phosphorylated by TEK/TIE2. Tyrosine phosphorylated by activated PTK2B/PYK2. Dephosphorylation by PTPN2 may regulate interaction with GRB2. Phosphorylated by activated epidermal growth factor receptor. Phosphorylated in response to KIT signaling. Isoform p47Shc and isoform p52Shc are phosphorylated on tyrosine residues of the Pro-rich domain. Isoform p66Shc is phosphorylated on Ser-36 by PRKCB upon treatment with insulin, hydrogen peroxide or irradiation with ultraviolet light. FLT3 signaling promotes tyrosine phosphorylation of isoform p47Shc and isoform p52Shc. Also tyrosine phosphorylated by ligand-activated ALK. Widely expressed. Expressed in neural stem cells but absent in mature neurons.

It is found in the cytoplasm. The protein localises to the cell junction. It localises to the focal adhesion. The protein resides in the mitochondrion matrix. Its subcellular location is the mitochondrion. Its function is as follows. Signaling adapter that couples activated growth factor receptors to signaling pathways. Participates in signaling downstream of the angiopoietin receptor TEK/TIE2, and plays a role in the regulation of endothelial cell migration and sprouting angiogenesis. Participates in a signaling cascade initiated by activated KIT and KITLG/SCF. Isoform p47Shc and isoform p52Shc, once phosphorylated, couple activated receptor kinases to Ras via the recruitment of the GRB2/SOS complex and are implicated in the cytoplasmic propagation of mitogenic signals. Isoform p47Shc and isoform p52 may thus function as initiators of the Ras signaling cascade in various non-neuronal systems. Isoform p66Shc does not mediate Ras activation, but is involved in signal transduction pathways that regulate the cellular response to oxidative stress and life span. Isoform p66Shc acts as a downstream target of the tumor suppressor p53 and is indispensable for the ability of stress-activated p53 to induce elevation of intracellular oxidants, cytochrome c release and apoptosis. The expression of isoform p66Shc has been correlated with life span. The sequence is that of SHC-transforming protein 1 (Shc1) from Mus musculus (Mouse).